Reading from the N-terminus, the 370-residue chain is Cytochrome b (370 aa).

Transmembrane regions (helical) follow at residues 25–45, 69–90, 105–125, and 170–190; these read FGSM…FLAV, WMMQ…YIHI, WFSG…GYVL, and FFAL…LHIL. Heme b is bound by residues histidine 75 and histidine 89. Histidine 174 and histidine 188 together coordinate heme b. Position 193 (histidine 193) interacts with a ubiquinone. The next 4 helical transmembrane spans lie at 218–238, 280–300, 312–332, and 339–358; these read YKDM…VSFF, LGGA…PFTH, FMQL…WTAT, and FTTI…ISNP.

The protein belongs to the cytochrome b family. The cytochrome bc1 complex contains 3 respiratory subunits (MT-CYB, CYC1 and UQCRFS1), 2 core proteins (UQCRC1 and UQCRC2) and probably 6 low-molecular weight proteins. It depends on heme b as a cofactor.

Its subcellular location is the mitochondrion inner membrane. Its function is as follows. Component of the ubiquinol-cytochrome c reductase complex (complex III or cytochrome b-c1 complex) that is part of the mitochondrial respiratory chain. The b-c1 complex mediates electron transfer from ubiquinol to cytochrome c. Contributes to the generation of a proton gradient across the mitochondrial membrane that is then used for ATP synthesis. This Chilabothrus strigilatus mccraniei (Ragged Island boa constrictor) protein is Cytochrome b (MT-CYB).